The primary structure comprises 301 residues: L-threonate dehydrogenase (301 aa).

Residues 6 to 34 (YSVA…TYGI) and Thr101 each bind NAD(+). Lys177 is an active-site residue. Lys245 is a binding site for NAD(+).

Belongs to the HIBADH-related family. L-threonate dehydrogenase subfamily.

It catalyses the reaction L-threonate + NAD(+) = 2-dehydro-L-erythronate + NADH + H(+). Its function is as follows. Catalyzes oxidation of L-threonate to 2-oxo-tetronate. Can use either NAD(+) or NADP(+) as cosubstrate, with a preference for NAD(+). The protein is L-threonate dehydrogenase of Haemophilus influenzae (strain ATCC 51907 / DSM 11121 / KW20 / Rd).